The sequence spans 357 residues: MNPERWAADLVSNVKDYGKRIIDYAHEKTSNPQPVTVHTTNSAKGRLGEFLYQNRVSVGLGSAALFLAGLSYYKRYDYVRKRRAPRAPNHQKTQVVVLSAWNPLASVIAHDLDRRGFIVVVLVRDASEAATVSLQQRPYIQSLIVTHNEAVERFLLSFSNQSGPKEYALRLRGLILVPTGDSLYTPIENIGKDAWISAFQQLSESFSNVSRMIPLLKSQKARIIGLSHGILSAYEPPNYAVPSILSSSIETFLRTLKRETGLQVICIKLGNLSFLNYDHSSSPGKSNYPPSLCTERKVLNKIFDSLLGCWPSPTRHVGCRTFFMVTVSRFLPTCVIDGIFSLFGKFHFFSCSLIKRS.

Ser-282 carries the phosphoserine modification.

The protein belongs to the UPF0744 family.

It is found in the cytoplasm. The chain is UPF0744 protein C106.03 from Schizosaccharomyces pombe (strain 972 / ATCC 24843) (Fission yeast).